The sequence spans 203 residues: MRGKFITIEGVEGSGKTTQIQYIARYLTEKNIPHIITREPGGTALGKKIRELLLNPSYPVVPEAEILLYLADRAQHVGEKIIPHLDKGVWVISDRYFDSTLAYQGYGRGFDLTLLKSFIAFATKGLIPDLTVLIDLPPEVGLSRVKGRGEYDRLERETLEFHQRVREGFLQLARDQRFRVVDGRKKPEEIFWEIKGFLEGLNG.

Residue 10–17 coordinates ATP; that stretch reads GVEGSGKT.

Belongs to the thymidylate kinase family.

It catalyses the reaction dTMP + ATP = dTDP + ADP. Its function is as follows. Phosphorylation of dTMP to form dTDP in both de novo and salvage pathways of dTTP synthesis. The sequence is that of Thymidylate kinase from Carboxydothermus hydrogenoformans (strain ATCC BAA-161 / DSM 6008 / Z-2901).